Consider the following 426-residue polypeptide: Inositol hexakisphosphate kinase 2 (426 aa).

ATP contacts are provided by residues 207-209 (ENL) and Asp220. Residues Lys222 and 236-243 (KAANQIRK) each bind substrate. Asp383 provides a ligand contact to ATP. His386 contributes to the substrate binding site.

The protein belongs to the inositol phosphokinase (IPK) family.

The protein localises to the nucleus. The catalysed reaction is 1D-myo-inositol hexakisphosphate + ATP = 5-diphospho-1D-myo-inositol 1,2,3,4,6-pentakisphosphate + ADP. The protein operates within phospholipid metabolism; phosphatidylinositol metabolism. Its activity is regulated as follows. Inhibited by flavonoids, including myricetin, quercetin, luteolin, isorhamnetin, rhamnetin, kaempferol, diosmetin and apigenin. Its function is as follows. Converts inositol hexakisphosphate (InsP6) to diphosphoinositol pentakisphosphate (InsP7/PP-InsP5). This is Inositol hexakisphosphate kinase 2 from Homo sapiens (Human).